The sequence spans 513 residues: Ribonuclease Y (513 aa).

A helical membrane pass occupies residues 6 to 26 (YIIIAVVIIIICVILGLYVVD). The disordered stretch occupies residues 35–59 (EASKEARRLKEEAERDAEAKKKEAI). The region spanning 203–288 (TVHVVNLPND…EMVEKAKKEV (86 aa)) is the KH domain. One can recognise an HD domain in the interval 329 to 422 (VLKHSIEVSH…VQAADAISAA (94 aa)).

This sequence belongs to the RNase Y family.

The protein resides in the cell membrane. Its function is as follows. Endoribonuclease that initiates mRNA decay. This Clostridium botulinum (strain Okra / Type B1) protein is Ribonuclease Y.